Reading from the N-terminus, the 183-residue chain is uncharacterized protein (183 aa).

The signal sequence occupies residues 1–29 (MQCWQQPFLRFLQQPFFLATASLAGSSSS). The segment at 149–183 (PGSTCDGSLKGRAYPSCVPKRDPEHSREESHPLSG) is disordered. The segment covering 167 to 183 (PKRDPEHSREESHPLSG) has biased composition (basic and acidic residues).

Its subcellular location is the secreted. This is an uncharacterized protein from Homo sapiens (Human).